Consider the following 592-residue polypeptide: A-type ATP synthase subunit A (592 aa).

Residue 233–240 coordinates ATP; the sequence is GPFGSGKT.

It belongs to the ATPase alpha/beta chains family. As to quaternary structure, has multiple subunits with at least A(3), B(3), C, D, E, F, H, I and proteolipid K(x).

Its subcellular location is the cell membrane. The catalysed reaction is ATP + H2O + 4 H(+)(in) = ADP + phosphate + 5 H(+)(out). Functionally, component of the A-type ATP synthase that produces ATP from ADP in the presence of a proton gradient across the membrane. The A chain is the catalytic subunit. The chain is A-type ATP synthase subunit A from Saccharolobus solfataricus (strain ATCC 35092 / DSM 1617 / JCM 11322 / P2) (Sulfolobus solfataricus).